A 399-amino-acid chain; its full sequence is MSLTKSSESVFTEEEEEDSFSGRYTLWIKEALEELPHNFTITDPFISGHPIVFASLGFLKMTGYSREEVIGRNGKVFQGPKTNRRSIMEIREAIREERSVQVSLLNYRKSGSPFWMLFHMCPVFGKDDGKVTNFVAVQVPISGREHHRKKLRNVGDLSSDTSPTFGSCRREVCFGNFVCQDRALPVECDDDEQGLEDWEQCEASESEKLKATEAINNVLSILVHYSELSGRLVCGKRYCLRGVDCLSSSLVISLGRIKQSFVLTNPCLPDMPIIYASDAFLTLTGYKRQEVLGQNCRFLSGVDTDSSVLYEMKECILKGQSCTVQILNYSNRKDKSSFWNLLHISPVRNASGKTAYFVGVQVEASCRNTEIKELRPETRQLSVVGAVRVAVRSSLMVTC.

The PAS 1 domain maps to 26–97 (LWIKEALEEL…MEIREAIREE (72 aa)). The PAC 1 domain maps to 98–153 (RSVQVSLLNYRKSGSPFWMLFHMCPVFGKDDGKVTNFVAVQVPISGREHHRKKLRN). Residues 249–320 (SLVISLGRIK…EMKECILKGQ (72 aa)) form the PAS 2 domain. Position 296 is an S-4a-FMN cysteine (C296). A PAC 2 domain is found at 320–376 (QSCTVQILNYSNRKDKSSFWNLLHISPVRNASGKTAYFVGVQVEASCRNTEIKELRP).

As to quaternary structure, interacts with VTC2, VTC5 and BLH10. FMN binds covalently to cysteine after exposure to blue light and is reversed in the dark.

This is Protein TWIN LOV 1 (TLP1) from Arabidopsis thaliana (Mouse-ear cress).